We begin with the raw amino-acid sequence, 921 residues long: Protein translocase subunit SecA (921 aa).

ATP is bound by residues Gln-86, 104-108 (GEGKT), and Asp-512. Cys-905, Cys-907, Cys-916, and His-917 together coordinate Zn(2+).

Belongs to the SecA family. Monomer and homodimer. Part of the essential Sec protein translocation apparatus which comprises SecA, SecYEG and auxiliary proteins SecDF-YajC and YidC. Requires Zn(2+) as cofactor.

It is found in the cell inner membrane. The protein resides in the cytoplasm. It catalyses the reaction ATP + H2O + cellular proteinSide 1 = ADP + phosphate + cellular proteinSide 2.. Its function is as follows. Part of the Sec protein translocase complex. Interacts with the SecYEG preprotein conducting channel. Has a central role in coupling the hydrolysis of ATP to the transfer of proteins into and across the cell membrane, serving both as a receptor for the preprotein-SecB complex and as an ATP-driven molecular motor driving the stepwise translocation of polypeptide chains across the membrane. In Caulobacter sp. (strain K31), this protein is Protein translocase subunit SecA.